Consider the following 841-residue polypeptide: Protein translocase subunit SecA (841 aa).

Residues Gln85, 103-107, and Asp492 contribute to the ATP site; that span reads GEGKT. A disordered region spans residues 788–841; sequence EVVQGQTTAHQPQEGDEEKTVKKKPVRKVVDIGRNSPCHCGSGKKYKNCHGKTE. Zn(2+) contacts are provided by Cys825, Cys827, Cys836, and His837. The segment covering 829–841 has biased composition (basic residues); the sequence is SGKKYKNCHGKTE.

The protein belongs to the SecA family. As to quaternary structure, monomer and homodimer. Part of the essential Sec protein translocation apparatus which comprises SecA, SecYEG and auxiliary proteins SecDF. Other proteins may also be involved. It depends on Zn(2+) as a cofactor.

It is found in the cell membrane. Its subcellular location is the cytoplasm. It catalyses the reaction ATP + H2O + cellular proteinSide 1 = ADP + phosphate + cellular proteinSide 2.. Functionally, part of the Sec protein translocase complex. Interacts with the SecYEG preprotein conducting channel. Has a central role in coupling the hydrolysis of ATP to the transfer of proteins into and across the cell membrane, serving as an ATP-driven molecular motor driving the stepwise translocation of polypeptide chains across the membrane. The protein is Protein translocase subunit SecA of Bacillus pumilus (strain SAFR-032).